A 920-amino-acid polypeptide reads, in one-letter code: MWLAAAVPSLARRLLLLGPPPPPLLLLLSRSSRRRRRLHSLGLAAMPEKRPFERLPAEVSPINYSLCLKPDLLDFTFEGKLEAAAQVRQATNQIVMNCADIDIITASYAPEGDEEIHATGFNYQNEDEKVTLSFPSTLQTGTGTLKIDFVGELNDKMKGFYRSRYTTPAGEVRYAAVTQFEATDARRAFPCWDEPAIKATFDISLVVPKDRVALSNMNVIDRKPYPDDENLVEVKFARTPVMSTYLVAFVVGEYDFVETRSKDGVCVRVYTPVGKAEQGKFALEVAAKTLPFYKDYFNVPYPLPKIDLIAIADFAAGAMENWGLVTYRETALLIDPKNSCSSSRQWVALVVGHELAHQWFGNLVTMEWWTHLWLNEGFASWIEYLCVDHCFPEYDIWTQFVSADYTRAQELDALDNSHPIEVSVGHPSEVDEIFDAISYSKGASVIRMLHDYIGDKDFKKGMNMYLTKFQQKNAATEDLWESLESASGKPIAAVMNTWTKQMGFPLIYVEAEQVEDDRVLKLSQKKFCASGPYGGEDCPQWMVPITISTSEDPNQAKLKILMDKPEMSVVLKNVKPDQWVKLNLGTVGFYRTQYSSAMLESLLPGIRDLSLPPVDRLGLQNDLFSLARAGIISTVEVLKVMEAFVNEPNYTVWSDLSCNLGILSTLLSHTDFYEEIQEFVKDVFSPIGERLGWDPKPGEGHLDALLRGLVLGKLGKAGHKATLEEARRRFKEHVEGKQILSADLRSPVYLTVLKHGDGATLDIMLKLHKQADMQEEKNRIERVLGATLSPELIQKVLTFALSEEVRPQDTVSVIGGVAGGSKHGRKAAWKFIKDNWEELHNRYQGGFLISRLIKLSVEGFAVDKMAGEVKAFFESHPAPSAERTIQQCCENILLNAAWLKRDADSIHQYLLQRKTSPPSV.

Substrate contacts are provided by residues E181 and 317–321; that span reads GAMEN. H353 contributes to the Zn(2+) binding site. Catalysis depends on E354, which acts as the Proton acceptor. Residues H357 and E376 each coordinate Zn(2+). 3'-nitrotyrosine is present on Y465. Residues 727-731 carry the Nuclear localization signal motif; sequence RRRFK.

This sequence belongs to the peptidase M1 family. In terms of assembly, monomer. Requires Zn(2+) as cofactor. As to expression, widely expressed. Highest expression in brain, particularly the striatum and hippocampus. Expressed in Sertoli cells.

The protein resides in the cytoplasm. It is found in the cytosol. The protein localises to the nucleus. The enzyme catalyses Release of an N-terminal amino acid, preferentially alanine, from a wide range of peptides, amides and arylamides.. Strongly inhibited by bestatin, leuhistin, actinonin, amastatin, 1,10-phenanthroline, DFP, PCMBS, Zn(2+), Cd(2+), Co(2+), Cu(2+), Hg(2+), EDTA and puromycin. Not inhibited by PMSF, and only slightly inhibited by leupeptin and aprotinin. Activity is increased by Mg(2+) and Ca(2+). In terms of biological role, aminopeptidase with broad substrate specificity for several peptides. Involved in proteolytic events essential for cell growth and viability. May act as regulator of neuropeptide activity. Plays a role in the antigen-processing pathway for MHC class I molecules. Involved in the N-terminal trimming of cytotoxic T-cell epitope precursors. Digests the poly-Q peptides found in many cellular proteins. The protein is Puromycin-sensitive aminopeptidase (Npepps) of Mus musculus (Mouse).